The following is a 384-amino-acid chain: Cysteine desulfurase (384 aa).

Pyridoxal 5'-phosphate-binding positions include Gly-74–Thr-75, Asn-154, Gln-180, and Ser-200–His-202. Lys-203 is subject to N6-(pyridoxal phosphate)lysine. Thr-238 provides a ligand contact to pyridoxal 5'-phosphate. Cys-325 serves as the catalytic Cysteine persulfide intermediate. A [2Fe-2S] cluster-binding site is contributed by Cys-325.

The protein belongs to the class-V pyridoxal-phosphate-dependent aminotransferase family. NifS/IscS subfamily. In terms of assembly, homodimer. The cofactor is pyridoxal 5'-phosphate.

It catalyses the reaction (sulfur carrier)-H + L-cysteine = (sulfur carrier)-SH + L-alanine. In terms of biological role, catalyzes the removal of elemental sulfur atoms from cysteine to produce alanine. Seems to participate in the biosynthesis of the nitrogenase metalloclusters by providing the inorganic sulfur required for the Fe-S core formation. This chain is Cysteine desulfurase, found in Rhodobacter capsulatus (Rhodopseudomonas capsulata).